A 66-amino-acid chain; its full sequence is Protein dhr (66 aa).

Involved in the depression of host DNA replication. In Escherichia phage 186 (Bacteriophage 186), this protein is Protein dhr (dhr).